The chain runs to 474 residues: Cyclin-dependent kinase 18 (474 aa).

Phosphoserine occurs at positions 14, 74, 89, 98, 117, and 132. Residues 44–93 (NLQLGPLGRDPPQECSTFSPTDSGEEPGQLSPGVQFQRRQNQRRFSMEDV) are disordered. In terms of domain architecture, Protein kinase spans 144 to 425 (YVKLDKLGEG…AEAALSHSYF (282 aa)). ATP is bound by residues 150 to 158 (LGEGTYATV) and Lys173. Asp265 serves as the catalytic Proton acceptor. Ser440 and Ser443 each carry phosphoserine.

Belongs to the protein kinase superfamily. CMGC Ser/Thr protein kinase family. CDC2/CDKX subfamily. As to expression, isoform 2 expression is limited to several subcortical nuclei of the basal gangli and the spinal cord. Isoform 1 is widely expressed.

The catalysed reaction is L-seryl-[protein] + ATP = O-phospho-L-seryl-[protein] + ADP + H(+). It carries out the reaction L-threonyl-[protein] + ATP = O-phospho-L-threonyl-[protein] + ADP + H(+). Its function is as follows. May play a role in signal transduction cascades in terminally differentiated cells. This Homo sapiens (Human) protein is Cyclin-dependent kinase 18 (CDK18).